A 208-amino-acid chain; its full sequence is Cytochrome c oxidase assembly protein CtaG (208 aa).

Topologically, residues 1-19 (MKQRPTGPDTTPRNRRGFG) are cytoplasmic. A helical; Signal-anchor for type II membrane protein membrane pass occupies residues 20–42 (RDTAVASVCGLVVALMVGASYAA). Residues 43–208 (VPFYNWFCRV…SEAGPRQGAL (166 aa)) lie on the Periplasmic side of the membrane.

It belongs to the COX11/CtaG family.

Its subcellular location is the cell inner membrane. Exerts its effect at some terminal stage of cytochrome c oxidase synthesis, probably by being involved in the insertion of the copper B into subunit I. The polypeptide is Cytochrome c oxidase assembly protein CtaG (Rhodopseudomonas palustris (strain BisA53)).